The primary structure comprises 463 residues: Aurantioclavine synthase cnsA (463 aa).

The FAD-binding PCMH-type domain maps to 16–199 (ERFNQRGNVF…TQATVRVFPD (184 aa)).

The protein belongs to the oxygen-dependent FAD-linked oxidoreductase family. Requires FAD as cofactor.

It functions in the pathway alkaloid biosynthesis. Its function is as follows. FAD-linked oxidoreductase; part of the gene cluster that mediates the biosynthesis of communesins, a prominent class of indole alkaloids with great potential as pharmaceuticals. Communesins are biosynthesized by the coupling of tryptamine and aurantioclavine, two building blocks derived from L-tryptophan. The L-tryptophan decarboxylase cnsB converts L-tryptophan to tryptamine, whereas the tryptophan dimethylallyltransferase cnsF converts L-tryptophan to 4-dimethylallyl tryptophan which is further transformed to aurantioclavine by the aurantioclavine synthase cnsA, probably aided by the catalase cnsD. The cytochrome P450 monooxygenase cnsC catalyzes the heterodimeric coupling between the two different indole moieties, tryptamine and aurantioclavine, to construct vicinal quaternary stereocenters and yield the heptacyclic communesin scaffold. The O-methyltransferase cnsE then methylates the communesin scaffold to produce communesin K, the simplest characterized communesin that contains the heptacyclic core. The dioxygenase cnsJ converts communesin K into communesin I. Acylation to introduce the hexadienyl group at position N16 of communesin I by the acyltransferase cnsK leads to the production of communesin B. The hexadienyl group is produced by the highly reducing polyketide synthase cnsI, before being hydrolytically removed from cnsI by the serine hydrolase cnsH, converted into hexadienyl-CoA by the CoA ligase cnsG, and then transferred to communesin I by cnsK. Surprisingly, cnsK may also be a promiscuous acyltransferase that can tolerate a range of acyl groups, including acetyl-, propionyl-, and butyryl-CoA, which lead to communesins A, G and H respectively. The roles of the alpha-ketoglutarate-dependent dioxygenases cnsM and cnsP have still to be determined. This chain is Aurantioclavine synthase cnsA, found in Penicillium expansum (Blue mold rot fungus).